The primary structure comprises 199 residues: Recombination protein RecR (199 aa).

A C4-type zinc finger spans residues 58 to 73 (CSICNNITDVDPCTYC). A Toprim domain is found at 81–176 (QVICVVEEPT…RVTRIATGVP (96 aa)).

It belongs to the RecR family.

Its function is as follows. May play a role in DNA repair. It seems to be involved in an RecBC-independent recombinational process of DNA repair. It may act with RecF and RecO. In Koribacter versatilis (strain Ellin345), this protein is Recombination protein RecR.